The sequence spans 231 residues: Small ribosomal subunit protein uS3 (231 aa).

Positions Val-17 to Ala-86 constitute a KH type-2 domain.

Belongs to the universal ribosomal protein uS3 family. Part of the 30S ribosomal subunit.

Its function is as follows. Binds the lower part of the 30S subunit head. This chain is Small ribosomal subunit protein uS3, found in Methanocorpusculum labreanum (strain ATCC 43576 / DSM 4855 / Z).